The sequence spans 461 residues: UDP-N-acetylmuramate--L-alanine ligase (461 aa).

ATP is bound at residue 112 to 118 (GTHGKTT).

It belongs to the MurCDEF family.

The protein resides in the cytoplasm. The enzyme catalyses UDP-N-acetyl-alpha-D-muramate + L-alanine + ATP = UDP-N-acetyl-alpha-D-muramoyl-L-alanine + ADP + phosphate + H(+). It functions in the pathway cell wall biogenesis; peptidoglycan biosynthesis. In terms of biological role, cell wall formation. In Hydrogenovibrio crunogenus (strain DSM 25203 / XCL-2) (Thiomicrospira crunogena), this protein is UDP-N-acetylmuramate--L-alanine ligase.